A 30-amino-acid polypeptide reads, in one-letter code: Conotoxin Bt12.1 (30 aa).

Contains 3 disulfide bonds. In terms of tissue distribution, expressed by the venom duct.

It is found in the secreted. This chain is Conotoxin Bt12.1, found in Conus betulinus (Beech cone).